We begin with the raw amino-acid sequence, 365 residues long: Putative 2-dehydropantoate 2-reductase (365 aa).

The protein belongs to the ketopantoate reductase family.

It carries out the reaction (R)-pantoate + NADP(+) = 2-dehydropantoate + NADPH + H(+). It participates in cofactor biosynthesis; (R)-pantothenate biosynthesis; (R)-pantoate from 3-methyl-2-oxobutanoate: step 2/2. Functionally, catalyzes the NADPH-dependent reduction of ketopantoate into pantoic acid. The protein is Putative 2-dehydropantoate 2-reductase (KPR) of Arabidopsis thaliana (Mouse-ear cress).